A 332-amino-acid polypeptide reads, in one-letter code: Malate dehydrogenase (332 aa).

Residues 11–16 and Asp35 each bind NAD(+); that span reads GAGNVG. Substrate is bound by residues Arg97 and Arg103. NAD(+)-binding positions include Asn110 and 133 to 135; that span reads VTN. Substrate-binding residues include Asn135 and Arg166. The Proton acceptor role is filled by His190.

The protein belongs to the LDH/MDH superfamily. MDH type 3 family.

It carries out the reaction (S)-malate + NAD(+) = oxaloacetate + NADH + H(+). In terms of biological role, catalyzes the reversible oxidation of malate to oxaloacetate. The sequence is that of Malate dehydrogenase from Hydrogenobaculum sp. (strain Y04AAS1).